The chain runs to 96 residues: Large ribosomal subunit protein bL25 (96 aa).

This sequence belongs to the bacterial ribosomal protein bL25 family. Part of the 50S ribosomal subunit; part of the 5S rRNA/L5/L18/L25 subcomplex. Contacts the 5S rRNA. Binds to the 5S rRNA independently of L5 and L18.

Functionally, this is one of the proteins that binds to the 5S RNA in the ribosome where it forms part of the central protuberance. The chain is Large ribosomal subunit protein bL25 from Francisella tularensis subsp. holarctica (strain FTNF002-00 / FTA).